A 142-amino-acid chain; its full sequence is Nitrogen fixation protein NifU 2 (142 aa).

The tract at residues 1-36 is disordered; it reads MKDLFDESLTLDTGSAAPGTAPGRPRRRQPAGGKAP. Over residues 14–23 the composition is skewed to low complexity; the sequence is GSAAPGTAPG.

This sequence belongs to the NifU family.

In terms of biological role, may be involved in the formation or repair of [Fe-S] clusters present in iron-sulfur proteins. The protein is Nitrogen fixation protein NifU 2 (nifU2) of Rhodobacter capsulatus (Rhodopseudomonas capsulata).